The chain runs to 396 residues: Elongation factor Tu (396 aa).

Positions 10–206 (KPHVNVGTIG…ALDSFIPEPT (197 aa)) constitute a tr-type G domain. The segment at 19-26 (GHVDHGKT) is G1. Residue 19–26 (GHVDHGKT) participates in GTP binding. Threonine 26 is a binding site for Mg(2+). The interval 60 to 64 (GITIS) is G2. A G3 region spans residues 81 to 84 (DCPG). GTP-binding positions include 81 to 85 (DCPGH) and 136 to 139 (NKAD). The tract at residues 136 to 139 (NKAD) is G4. A G5 region spans residues 174–176 (SAR).

The protein belongs to the TRAFAC class translation factor GTPase superfamily. Classic translation factor GTPase family. EF-Tu/EF-1A subfamily. As to quaternary structure, monomer.

The protein resides in the cytoplasm. The catalysed reaction is GTP + H2O = GDP + phosphate + H(+). In terms of biological role, GTP hydrolase that promotes the GTP-dependent binding of aminoacyl-tRNA to the A-site of ribosomes during protein biosynthesis. The chain is Elongation factor Tu from Xanthomonas euvesicatoria pv. vesicatoria (strain 85-10) (Xanthomonas campestris pv. vesicatoria).